A 226-amino-acid polypeptide reads, in one-letter code: Leucyl/phenylalanyl-tRNA--protein transferase (226 aa).

Belongs to the L/F-transferase family.

The protein localises to the cytoplasm. It carries out the reaction N-terminal L-lysyl-[protein] + L-leucyl-tRNA(Leu) = N-terminal L-leucyl-L-lysyl-[protein] + tRNA(Leu) + H(+). The catalysed reaction is N-terminal L-arginyl-[protein] + L-leucyl-tRNA(Leu) = N-terminal L-leucyl-L-arginyl-[protein] + tRNA(Leu) + H(+). The enzyme catalyses L-phenylalanyl-tRNA(Phe) + an N-terminal L-alpha-aminoacyl-[protein] = an N-terminal L-phenylalanyl-L-alpha-aminoacyl-[protein] + tRNA(Phe). Functions in the N-end rule pathway of protein degradation where it conjugates Leu, Phe and, less efficiently, Met from aminoacyl-tRNAs to the N-termini of proteins containing an N-terminal arginine or lysine. This Pseudomonas putida (strain ATCC 47054 / DSM 6125 / CFBP 8728 / NCIMB 11950 / KT2440) protein is Leucyl/phenylalanyl-tRNA--protein transferase.